A 482-amino-acid polypeptide reads, in one-letter code: UDP-N-acetylmuramoyl-L-alanyl-D-glutamate--2,6-diaminopimelate ligase (482 aa).

Ser-24 is a binding site for UDP-N-acetyl-alpha-D-muramoyl-L-alanyl-D-glutamate. 105-111 (GTNGKTT) is an ATP binding site. Residues 147–148 (TT), Ser-174, Gln-180, and Arg-182 contribute to the UDP-N-acetyl-alpha-D-muramoyl-L-alanyl-D-glutamate site. Lys-214 carries the post-translational modification N6-carboxylysine. Meso-2,6-diaminopimelate-binding positions include Arg-378, 402 to 405 (DNPR), Gly-453, and Glu-457. Residues 402 to 405 (DNPR) carry the Meso-diaminopimelate recognition motif motif.

This sequence belongs to the MurCDEF family. MurE subfamily. Mg(2+) serves as cofactor. Post-translationally, carboxylation is probably crucial for Mg(2+) binding and, consequently, for the gamma-phosphate positioning of ATP.

Its subcellular location is the cytoplasm. The catalysed reaction is UDP-N-acetyl-alpha-D-muramoyl-L-alanyl-D-glutamate + meso-2,6-diaminopimelate + ATP = UDP-N-acetyl-alpha-D-muramoyl-L-alanyl-gamma-D-glutamyl-meso-2,6-diaminopimelate + ADP + phosphate + H(+). It functions in the pathway cell wall biogenesis; peptidoglycan biosynthesis. Its function is as follows. Catalyzes the addition of meso-diaminopimelic acid to the nucleotide precursor UDP-N-acetylmuramoyl-L-alanyl-D-glutamate (UMAG) in the biosynthesis of bacterial cell-wall peptidoglycan. The sequence is that of UDP-N-acetylmuramoyl-L-alanyl-D-glutamate--2,6-diaminopimelate ligase from Lawsonia intracellularis (strain PHE/MN1-00).